The chain runs to 307 residues: Formate hydrogenlyase subunit 4 (307 aa).

At 1-2 the chain is on the periplasmic side; that stretch reads MS. The helical transmembrane segment at 3–23 threads the bilayer; the sequence is VLYPLIQALVLFAVAPLLSGI. Over 24-67 the chain is Cytoplasmic; it reads TRVARARLHNRRGPGVLQEYRDIIKLLGRQSVGPDASGWVFRLT. Residues 68–88 traverse the membrane as a helical segment; the sequence is PYVMVGVMLTIATALPVVTVG. Topologically, residues 89 to 93 are periplasmic; sequence SPLPQ. A helical membrane pass occupies residues 94-114; that stretch reads LGDLITLLYLFAIARFFFAIS. Residues 115–131 lie on the Cytoplasmic side of the membrane; the sequence is GLDTGSPFTAIGASREA. Residues 132-152 traverse the membrane as a helical segment; that stretch reads MLGVLVEPMLLLGLWVAAQVA. At 153–167 the chain is on the periplasmic side; it reads GSTNISNITDTVYHW. Residues 168–188 form a helical membrane-spanning segment; it reads PLSQSIPLVLALCACAFATFI. Residues 189–221 lie on the Cytoplasmic side of the membrane; that stretch reads EMGKLPFDLAEAEQELQEGPLSEYSGSGFGVMK. The chain crosses the membrane as a helical span at residues 222-242; sequence WGISLKQLVVLQMFVGVFIPW. Topologically, residues 243-253 are periplasmic; it reads GQMETFTAGGL. Residues 254–274 traverse the membrane as a helical segment; the sequence is LLALVIAIVKLVVGVLVIALF. Residues 275 to 284 lie on the Cytoplasmic side of the membrane; sequence ENSMARLRLD. Residues 285-305 traverse the membrane as a helical segment; sequence ITPRITWAGFGFAFLAFVSLL. Residues 306–307 are Periplasmic-facing; sequence AA.

Belongs to the complex I subunit 1 family. As to quaternary structure, FHL comprises of a formate dehydrogenase, unidentified electron carriers and a hydrogenase (isoenzyme 3). In this non-energy conserving pathway molecular hydrogen and carbodioxide from formate are released.

The protein resides in the cell inner membrane. The sequence is that of Formate hydrogenlyase subunit 4 (hycD) from Escherichia coli (strain K12).